A 380-amino-acid chain; its full sequence is Actin-like protein (380 aa).

It belongs to the actin family. ARP1 subfamily.

It localises to the cytoplasm. It is found in the cytoskeleton. In terms of biological role, involved in nuclear migration. May function as a component of the dynactin complex which activates force generation by cytoplasmic dynein. The chain is Actin-like protein (ro-4) from Neurospora crassa (strain ATCC 24698 / 74-OR23-1A / CBS 708.71 / DSM 1257 / FGSC 987).